Reading from the N-terminus, the 581-residue chain is Proline--tRNA ligase (581 aa).

It belongs to the class-II aminoacyl-tRNA synthetase family. ProS type 1 subfamily. In terms of assembly, homodimer.

It is found in the cytoplasm. The enzyme catalyses tRNA(Pro) + L-proline + ATP = L-prolyl-tRNA(Pro) + AMP + diphosphate. Functionally, catalyzes the attachment of proline to tRNA(Pro) in a two-step reaction: proline is first activated by ATP to form Pro-AMP and then transferred to the acceptor end of tRNA(Pro). As ProRS can inadvertently accommodate and process non-cognate amino acids such as alanine and cysteine, to avoid such errors it has two additional distinct editing activities against alanine. One activity is designated as 'pretransfer' editing and involves the tRNA(Pro)-independent hydrolysis of activated Ala-AMP. The other activity is designated 'posttransfer' editing and involves deacylation of mischarged Ala-tRNA(Pro). The misacylated Cys-tRNA(Pro) is not edited by ProRS. In Verminephrobacter eiseniae (strain EF01-2), this protein is Proline--tRNA ligase.